The sequence spans 1270 residues: DNA-directed RNA polymerase subunit beta (1270 aa).

This sequence belongs to the RNA polymerase beta chain family. In terms of assembly, the RNAP catalytic core consists of 2 alpha, 1 beta, 1 beta' and 1 omega subunit. When a sigma factor is associated with the core the holoenzyme is formed, which can initiate transcription.

The catalysed reaction is RNA(n) + a ribonucleoside 5'-triphosphate = RNA(n+1) + diphosphate. In terms of biological role, DNA-dependent RNA polymerase catalyzes the transcription of DNA into RNA using the four ribonucleoside triphosphates as substrates. The chain is DNA-directed RNA polymerase subunit beta from Flavobacterium johnsoniae (strain ATCC 17061 / DSM 2064 / JCM 8514 / BCRC 14874 / CCUG 350202 / NBRC 14942 / NCIMB 11054 / UW101) (Cytophaga johnsonae).